The primary structure comprises 348 residues: Phospho-2-dehydro-3-deoxyheptonate aldolase, Trp-sensitive (348 aa).

This sequence belongs to the class-I DAHP synthase family.

The enzyme catalyses D-erythrose 4-phosphate + phosphoenolpyruvate + H2O = 7-phospho-2-dehydro-3-deoxy-D-arabino-heptonate + phosphate. It participates in metabolic intermediate biosynthesis; chorismate biosynthesis; chorismate from D-erythrose 4-phosphate and phosphoenolpyruvate: step 1/7. Functionally, stereospecific condensation of phosphoenolpyruvate (PEP) and D-erythrose-4-phosphate (E4P) giving rise to 3-deoxy-D-arabino-heptulosonate-7-phosphate (DAHP). This is Phospho-2-dehydro-3-deoxyheptonate aldolase, Trp-sensitive (aroH) from Buchnera aphidicola subsp. Schizaphis graminum (strain Sg).